Here is a 116-residue protein sequence, read N- to C-terminus: T cell receptor alpha variable 38-2/delta variable 8 (116 aa).

A signal peptide spans 1-21; the sequence is MACPGFLWALVISTCLEFSMA. The region spanning 22 to 116 is the Ig-like domain; sequence QTVTQSQPEM…AAMYFCAYRS (95 aa). A disulfide bridge links C43 with C112. An N-linked (GlcNAc...) asparagine glycan is attached at N78.

As to quaternary structure, alpha-beta TR is a heterodimer composed of an alpha and beta chain; disulfide-linked. The alpha-beta TR is associated with the transmembrane signaling CD3 coreceptor proteins to form the TR-CD3 (TcR or TCR). The assembly of alpha-beta TR heterodimers with CD3 occurs in the endoplasmic reticulum where a single alpha-beta TR heterodimer associates with one CD3D-CD3E heterodimer, one CD3G-CD3E heterodimer and one CD247 homodimer forming a stable octameric structure. CD3D-CD3E and CD3G-CD3E heterodimers preferentially associate with TR alpha and TR beta chains, respectively. The association of the CD247 homodimer is the last step of TcR assembly in the endoplasmic reticulum and is required for transport to the cell surface.

The protein resides in the cell membrane. Its function is as follows. V region of the variable domain of T cell receptor (TR) alpha chain that participates in the antigen recognition. Alpha-beta T cell receptors are antigen specific receptors which are essential to the immune response and are present on the cell surface of T lymphocytes. Recognize peptide-major histocompatibility (MH) (pMH) complexes that are displayed by antigen presenting cells (APC), a prerequisite for efficient T cell adaptive immunity against pathogens. Binding of alpha-beta TR to pMH complex initiates TR-CD3 clustering on the cell surface and intracellular activation of LCK that phosphorylates the ITAM motifs of CD3G, CD3D, CD3E and CD247 enabling the recruitment of ZAP70. In turn ZAP70 phosphorylates LAT, which recruits numerous signaling molecules to form the LAT signalosome. The LAT signalosome propagates signal branching to three major signaling pathways, the calcium, the mitogen-activated protein kinase (MAPK) kinase and the nuclear factor NF-kappa-B (NF-kB) pathways, leading to the mobilization of transcription factors that are critical for gene expression and essential for T cell growth and differentiation. The T cell repertoire is generated in the thymus, by V-(D)-J rearrangement. This repertoire is then shaped by intrathymic selection events to generate a peripheral T cell pool of self-MH restricted, non-autoaggressive T cells. Post-thymic interaction of alpha-beta TR with the pMH complexes shapes TR structural and functional avidity. The protein is T cell receptor alpha variable 38-2/delta variable 8 of Homo sapiens (Human).